Reading from the N-terminus, the 322-residue chain is Beta-ketoacyl-[acyl-carrier-protein] synthase III (322 aa).

Residues C113 and H249 contribute to the active site. The interval 250–254 (QANLR) is ACP-binding. N279 is an active-site residue.

This sequence belongs to the thiolase-like superfamily. FabH family. As to quaternary structure, homodimer.

Its subcellular location is the cytoplasm. The catalysed reaction is malonyl-[ACP] + acetyl-CoA + H(+) = 3-oxobutanoyl-[ACP] + CO2 + CoA. Its pathway is lipid metabolism; fatty acid biosynthesis. Its function is as follows. Catalyzes the condensation reaction of fatty acid synthesis by the addition to an acyl acceptor of two carbons from malonyl-ACP. Catalyzes the first condensation reaction which initiates fatty acid synthesis and may therefore play a role in governing the total rate of fatty acid production. Possesses both acetoacetyl-ACP synthase and acetyl transacylase activities. Its substrate specificity determines the biosynthesis of branched-chain and/or straight-chain of fatty acids. The protein is Beta-ketoacyl-[acyl-carrier-protein] synthase III of Marinobacter nauticus (strain ATCC 700491 / DSM 11845 / VT8) (Marinobacter aquaeolei).